The primary structure comprises 247 residues: Ras-like protein family member 11B (247 aa).

Residues 28–245 form a small GTPase-like region; it reads AGRRLVKIAV…ALSAKVRTVT (218 aa). Residues 39 to 46, 86 to 93, and 151 to 154 each bind GTP; these read GASGVGKT, DTPGIQVH, and NKAD. Residues 202-228 are disordered; that stretch reads PKQQPSSTPEKRRTSLIPRPKSPNMQD.

Belongs to the small GTPase superfamily. Ras family.

It catalyses the reaction GTP + H2O = GDP + phosphate + H(+). This chain is Ras-like protein family member 11B, found in Mus musculus (Mouse).